The chain runs to 179 residues: Apoptosis regulator Bcl-2 homolog (179 aa).

The BH1 motif lies at 76–95 (ELFKDLINWGRICGFIVFSA). A BH2 motif is present at residues 126–141 (PWMISHGGQEEFLAFS).

This sequence belongs to the Bcl-2 family. Interacts with host BECN1 (via BH3 homology domain); this interaction allows the virus to inhibit BECN1, and thus autophagy. Interacts with host BID. Interacts with host BAX.

The protein resides in the host mitochondrion. The protein localises to the host endoplasmic reticulum. Functionally, suppresses apoptosis in host cell to promote the viral replication. Has the ability to potentially bind to all the members of the proapoptotic Bcl-2 family. Inhibits autophagy by interacting with host Beclin 1 (BECN1). The sequence is that of Apoptosis regulator Bcl-2 homolog from African swine fever virus (isolate Pig/Kenya/KEN-50/1950) (ASFV).